We begin with the raw amino-acid sequence, 29 residues long: U1-pseudomyrmecitoxin-Pt1 subunit SS2 (29 aa).

This sequence belongs to the myrmexin family. As to quaternary structure, heterodimer composed of subunit SS2 and subunit LS1 (U1-PSDTX-Pt1e), and heterodimer composed of subunit SS2 and LS2 (U1-PSDTX-Pt1c); disulfide-linked. As to expression, expressed by the venom gland.

The protein localises to the secreted. This heterodimer may have anti-inflammatory properties, since the myrmexin complex (composed of 6 SS-LS heterodimers) inhibits carrageenin-induced edema in a dose-dependent manner (after subcutaneous injection into rats). The polypeptide is U1-pseudomyrmecitoxin-Pt1 subunit SS2 (Pseudomyrmex triplarinus (Ant)).